A 294-amino-acid polypeptide reads, in one-letter code: Mimecan (294 aa).

Positions 1–19 (MKTLQAAFFLVAFVPLVKP) are cleaved as a signal peptide. N-linked (GlcNAc...) asparagine glycosylation is present at Asn61. 7 LRR repeats span residues 108-127 (EAVPPLPKETAYLYARFNKI), 128-151 (KRIAVSDFADITTLRRIDFSGNMI), 152-175 (EEIEDGAFSKLLLLEELSLAENRL), 176-195 (VKLPVLPPKLTTFNANQNRI), 196-221 (KSRGIKNNAFKKLTNLAYLYLGHNAL), 222-242 (ESVPLNLPESLRILHLQHNNI), and 243-273 (TTINDDTFCKSNNTRYIRTRMDEIRMEGNPI). Asn241 and Asn254 each carry an N-linked (GlcNAc...) asparagine glycan. A disulfide bridge connects residues Cys251 and Cys284.

It belongs to the small leucine-rich proteoglycan (SLRP) family. SLRP class III subfamily. Post-translationally, the composition of the N-linked chains or the substitution of the N-linked sites is different between embryonic and adult tissues. Contains keratan sulfate.

It is found in the secreted. Its subcellular location is the extracellular space. The protein localises to the extracellular matrix. Induces bone formation in conjunction with TGF-beta-1 or TGF-beta-2. The protein is Mimecan (OGN) of Gallus gallus (Chicken).